The chain runs to 1487 residues: Secretory phospholipase A2 receptor (1487 aa).

The first 26 residues, Met1–Ala26, serve as a signal peptide directing secretion. Residues Gln27–Ser1396 lie on the Extracellular side of the membrane. One can recognise a Ricin B-type lectin domain in the interval Lys42–Pro165. 4 disulfides stabilise this stretch: Cys55–Cys68, Cys93–Cys110, Cys181–Cys207, and Cys195–Cys222. Asn97 carries an N-linked (GlcNAc...) asparagine glycan. The Fibronectin type-II domain occupies Ala176–Asp224. Residue Asn239 is glycosylated (N-linked (GlcNAc...) asparagine). 6 C-type lectin domains span residues Ser241–Lys357, Phe387–Lys504, His524–Cys643, Gly673–Arg797, Tyr819–Lys938, and Phe964–Cys1095. 10 cysteine pairs are disulfide-bonded: Cys263/Cys356, Cys333/Cys348, Cys408/Cys503, Cys480/Cys495, Cys617/Cys634, Cys699/Cys796, Cys774/Cys788, Cys840/Cys937, Cys914/Cys929, and Cys1066/Cys1086. Residue Asn928 is glycosylated (N-linked (GlcNAc...) asparagine). 3 N-linked (GlcNAc...) asparagine glycosylation sites follow: Asn1107, Asn1122, and Asn1131. 2 C-type lectin domains span residues Tyr1120 to Cys1231 and Phe1256 to Lys1377. 3 cysteine pairs are disulfide-bonded: Cys1208-Cys1222, Cys1279-Cys1376, and Cys1353-Cys1368. Residues Ile1397–Phe1417 form a helical membrane-spanning segment. Residues Trp1418–Pro1487 are Cytoplasmic-facing. Positions Gly1435–Leu1441 match the Endocytosis signal motif. Positions Asp1463 to Lys1475 are enriched in basic and acidic residues. The segment at Asp1463–Pro1487 is disordered.

Interacts with sPLA2-IB/PLA2G1B; this interaction mediates intracellular signaling as well as clearance of extracellular sPLA2-IB/PLA2G1B via endocytotic pathway. Interacts with sPLA2-X/PLA2G10; this interaction mediates sPLA2-X/PLA2G10 clearance and inactivation. The secretory phospholipase A2 receptor form may be produced by the action of metalloproteinases. It contains all extracellular domains and only lacks transmembrane and cytosolic regions. It is however unclear whether this form is produced by proteolytic cleavage as suggested by some experiments reported by PubMed:11830583, or by alternative splicing. Widely expressed. Present in type II alveolar epithelial cells and a subset of splenic lymphocytes. Present at the surface of polymorphonuclear neutrophils (at protein level).

Its subcellular location is the cell membrane. The protein localises to the secreted. Receptor for secretory phospholipase A2 (sPLA2). Acts as a receptor for phospholipases sPLA2-IB/PLA2G1B, sPLA2-X/PLA2G10 and, with lower affinity, sPLA2-IIA/PLA2G2A. Also able to bind to snake PA2-like toxins. Although its precise function remains unclear, binding of sPLA2 to its receptor participates in both positive and negative regulation of sPLA2 functions as well as clearance of sPLA2. Binding of sPLA2-IB/PLA2G1B induces various effects depending on the cell type, such as activation of the mitogen-activated protein kinase (MAPK) cascade to induce cell proliferation, the production of lipid mediators, selective release of arachidonic acid in bone marrow-derived mast cells. In neutrophils, binding of sPLA2-IB/PLA2G1B can activate p38 MAPK to stimulate elastase release and cell adhesion. May be involved in responses in pro-inflammatory cytokine productions during endotoxic shock. Also has endocytic properties and rapidly internalizes sPLA2 ligands, which is particularly important for the clearance of extracellular sPLA2s to protect their potent enzymatic activities. The soluble secretory phospholipase A2 receptor form is circulating and acts as a negative regulator of sPLA2 functions by blocking the biological functions of sPLA2-IB/PLA2G1B and sPLA2-X/PLA2G10. In podocytes, binding of sPLA2-IB/PLA2G1B can regulate podocyte survival and glomerular homeostasis. The protein is Secretory phospholipase A2 receptor (Pla2r1) of Mus musculus (Mouse).